Consider the following 537-residue polypeptide: MAHCVTLVQLSVSCDHLIDKDIGSKSDPLCVLLQDVGGGNWTELGRTERVQNCSSPEFSKTLQLEYHFETVQKLRFGIYDIDNKTPELGDDDFLGGAECSLGQIVSSRMLTLPLMLKPGKPAGRGTITVSAQELKDNRVVTMEVEARNLDKKDFLGKSDPFLEFFRQGDGKWHLAYRSEVIKNNLNPTWKRFSVPLQHFCGGDASTPIQVRCSDYDSDGSHDLIGTFHTSLAQLQAAPAEFECIHPEKQQKKKSYKNSGTICVKMCQVETEHSFLDYVMGGCQINFTVGVDFTGSNGDPSSPDSLHYLSPTGVNEYLTALWSVGSVVQDYDSDKLFPAFGFGAQVPPDWQVSHEFALNFNPSNPFCAGIQGIVDAYRQALPQVRLFGPTNFAPIINHVARFAAQAANQRNASQYFVLLLLTDGAVTDVEATREAVVRASYLPMSVIIVGVGCADFEAMEQLDADGGPLHTRSGEAAARDIVQFVPYRRFQNAPREALAQTVLAEVPTQLVSYFRAQGWAPFKPPPPAAKGPAQAPQA.

2 C2 domains span residues 1–114 and 123–245; these read MAHC…TLPL and GRGT…ECIH. Aspartate 21, aspartate 27, aspartate 80, aspartate 82, aspartate 92, aspartate 153, and aspartate 159 together coordinate Ca(2+). Lysine 171 bears the N6-acetyllysine mark. Ca(2+)-binding residues include aspartate 214, aspartate 216, and aspartate 222. The VWFA domain maps to 285–505; it reads NFTVGVDFTG…ALAQTVLAEV (221 aa).

It belongs to the copine family. As to quaternary structure, homodimer; homodimerizes via its C2 domains. Interacts with p65/RELA (via N-terminus); this interaction induces proteolytic cleavage of p65/RELA subunit and inhibition of NF-kappa-B transcriptional activity. Interacts (via VWFA domain) with ACTB, CCDC22, MYCBP2, PPP5C, RDX and UBE2O. Ca(2+) serves as cofactor. Expressed in liver, spleen, muscle, testis, adrenal (at protein level).

It localises to the nucleus. Its subcellular location is the cytoplasm. The protein localises to the cell membrane. Calcium-dependent phospholipid-binding protein that plays a role in calcium-mediated intracellular processes. Involved in the TNF-alpha receptor signaling pathway in a calcium-dependent manner. Exhibits calcium-dependent phospholipid binding properties. Plays a role in neuronal progenitor cell differentiation; induces neurite outgrowth via a AKT-dependent signaling cascade and calcium-independent manner. May recruit target proteins to the cell membrane in a calcium-dependent manner. May function in membrane trafficking. Involved in TNF-alpha-induced NF-kappa-B transcriptional repression by inducing endoprotease processing of the transcription factor NF-kappa-B p65/RELA subunit. Also induces endoprotease processing of NF-kappa-B p50/NFKB1, p52/NFKB2, RELB and REL. The chain is Copine-1 from Bos taurus (Bovine).